The following is a 320-amino-acid chain: Cytochrome f (320 aa).

Positions 1-35 are cleaved as a signal peptide; it reads MHTKNLFYSRPQQITQYLSAFLMMVILTRTSISSA. The heme site is built by Y36, C56, C59, and H60. Residues 286–306 form a helical membrane-spanning segment; the sequence is VQVLLFFFASIILAQIFLVLK.

Belongs to the cytochrome f family. In terms of assembly, the 4 large subunits of the cytochrome b6-f complex are cytochrome b6, subunit IV (17 kDa polypeptide, petD), cytochrome f and the Rieske protein, while the 4 small subunits are PetG, PetL, PetM and PetN. The complex functions as a dimer. Heme serves as cofactor.

Its subcellular location is the plastid thylakoid membrane. Functionally, component of the cytochrome b6-f complex, which mediates electron transfer between photosystem II (PSII) and photosystem I (PSI), cyclic electron flow around PSI, and state transitions. The sequence is that of Cytochrome f from Cuscuta obtusiflora (Peruvian dodder).